Reading from the N-terminus, the 344-residue chain is Enoyl-[acyl-carrier-protein] reductase, mitochondrial (344 aa).

The N-terminal 14 residues, methionine 1 to alanine 14, are a transit peptide targeting the mitochondrion. The active-site Proton donor is the tyrosine 69. Residues asparagine 142, asparagine 168–valine 171, arginine 191–arginine 193, tyrosine 255–methionine 258, phenylalanine 280–methionine 282, and lysine 338 contribute to the NADP(+) site.

This sequence belongs to the zinc-containing alcohol dehydrogenase family. Quinone oxidoreductase subfamily. As to quaternary structure, homodimer.

The protein localises to the mitochondrion. It catalyses the reaction a 2,3-saturated acyl-[ACP] + NADP(+) = a (2E)-enoyl-[ACP] + NADPH + H(+). In terms of biological role, catalyzes the NADPH-dependent reduction of trans-2-enoyl thioesters in mitochondrial fatty acid synthesis (fatty acid synthesis type II). Fatty acid chain elongation in mitochondria uses acyl carrier protein (ACP) as an acyl group carrier, but the enzyme accepts both ACP and CoA thioesters as substrates in vitro. May provide the octanoyl chain used for lipoic acid biosynthesis, regulating protein lipoylation and mitochondrial respiratory activity. Involved in iron homeostasis; affecting Fe-S cluster assembly and ceramide metabolism. Required for proper morphology and bioenergetic functions of mitochondria. Required for maintenance of neurons. The sequence is that of Enoyl-[acyl-carrier-protein] reductase, mitochondrial from Caenorhabditis elegans.